A 601-amino-acid polypeptide reads, in one-letter code: DNA ligase (601 aa).

Residue Asp-258 participates in ATP binding. The N6-AMP-lysine intermediate role is filled by Lys-260. Positions 265, 280, 310, 350, 427, and 433 each coordinate ATP.

Belongs to the ATP-dependent DNA ligase family. As to quaternary structure, interacts with the PCNA heterotrimer, probably via subunit PCNA3. Requires a divalent metal cation as cofactor.

The catalysed reaction is ATP + (deoxyribonucleotide)n-3'-hydroxyl + 5'-phospho-(deoxyribonucleotide)m = (deoxyribonucleotide)n+m + AMP + diphosphate.. Its activity is regulated as follows. Ligase activity stimulated by PCNA heterotrimer. Functionally, DNA ligase that seals nicks in double-stranded DNA during DNA replication, DNA recombination and DNA repair. Interaction with PCNA enhances ligase activity. DNA polymerase I, DNA ligase and the flap endonuclease may be constitutively associated with the PCNA heterotrimer forming a scanning complex able to couple DNA synthesis and Okazaki fragment maturation. The protein is DNA ligase of Saccharolobus solfataricus (strain ATCC 35092 / DSM 1617 / JCM 11322 / P2) (Sulfolobus solfataricus).